A 553-amino-acid chain; its full sequence is Non-SCF-type F-box protein ROY1 (553 aa).

An F-box domain is found at 3–49 (FQDQDIFIVFSHASLFLNQNDLLSLSLTSKKMHDMIAIPRLYSNIHI).

Interacts with SKP1 and YPT32; SKP1 is required for the interaction with YPT32.

It localises to the cytoplasm. The protein resides in the nucleus. The protein localises to the cytoplasmic vesicle membrane. In terms of biological role, non-SCF-type F-box protein involved in the endocytic with the vacuolar sorting pathway. Acts as a repressor of YPT52 by inhibiting the formation of active, GTP-bound, YPT52. Involved in the defense mechanism against methylmercury toxicity. In Saccharomyces cerevisiae (strain ATCC 204508 / S288c) (Baker's yeast), this protein is Non-SCF-type F-box protein ROY1 (ROY1).